An 874-amino-acid chain; its full sequence is Alanine--tRNA ligase (874 aa).

Positions 562, 566, 664, and 668 each coordinate Zn(2+).

The protein belongs to the class-II aminoacyl-tRNA synthetase family. It depends on Zn(2+) as a cofactor.

It is found in the cytoplasm. The catalysed reaction is tRNA(Ala) + L-alanine + ATP = L-alanyl-tRNA(Ala) + AMP + diphosphate. Functionally, catalyzes the attachment of alanine to tRNA(Ala) in a two-step reaction: alanine is first activated by ATP to form Ala-AMP and then transferred to the acceptor end of tRNA(Ala). Also edits incorrectly charged Ser-tRNA(Ala) and Gly-tRNA(Ala) via its editing domain. The chain is Alanine--tRNA ligase from Shewanella sediminis (strain HAW-EB3).